The following is a 242-amino-acid chain: NAD(P)H-quinone oxidoreductase subunit K (242 aa).

Residues Cys60, Cys61, Cys125, and Cys156 each contribute to the [4Fe-4S] cluster site.

Belongs to the complex I 20 kDa subunit family. As to quaternary structure, NDH-1 can be composed of about 15 different subunits; different subcomplexes with different compositions have been identified which probably have different functions. It depends on [4Fe-4S] cluster as a cofactor.

It localises to the cellular thylakoid membrane. It catalyses the reaction a plastoquinone + NADH + (n+1) H(+)(in) = a plastoquinol + NAD(+) + n H(+)(out). It carries out the reaction a plastoquinone + NADPH + (n+1) H(+)(in) = a plastoquinol + NADP(+) + n H(+)(out). Its function is as follows. NDH-1 shuttles electrons from an unknown electron donor, via FMN and iron-sulfur (Fe-S) centers, to quinones in the respiratory and/or the photosynthetic chain. The immediate electron acceptor for the enzyme in this species is believed to be plastoquinone. Couples the redox reaction to proton translocation, and thus conserves the redox energy in a proton gradient. Cyanobacterial NDH-1 also plays a role in inorganic carbon-concentration. The protein is NAD(P)H-quinone oxidoreductase subunit K of Prochlorococcus marinus (strain SARG / CCMP1375 / SS120).